The chain runs to 567 residues: Hexose transporter HXT11 (567 aa).

The segment covering Met-1–Ala-22 has biased composition (polar residues). The tract at residues Met-1–Glu-45 is disordered. Residues Met-1–Ser-56 are Cytoplasmic-facing. A helical membrane pass occupies residues Ala-57–Trp-77. Over Asp-78–Gly-112 the chain is Extracellular. An N-linked (GlcNAc...) asparagine glycan is attached at Asn-87. The chain crosses the membrane as a helical span at residues Leu-113–Gly-133. Residues Asp-134–Arg-139 lie on the Cytoplasmic side of the membrane. Residues Ile-140–Ile-160 form a helical membrane-spanning segment. Topologically, residues Asn-161–Arg-170 are extracellular. Residues Ile-171–Val-191 form a helical membrane-spanning segment. Topologically, residues Ala-192 to Arg-197 are cytoplasmic. A helical membrane pass occupies residues Gly-198 to Thr-218. Over Asn-219–Arg-232 the chain is Extracellular. Asn-227 carries an N-linked (GlcNAc...) asparagine glycan. Residues Val-233 to Pro-253 traverse the membrane as a helical segment. The Cytoplasmic segment spans residues Glu-254–Asp-336. The chain crosses the membrane as a helical span at residues Asn-337 to Lys-353. At Asp-354–Ser-359 the chain is on the extracellular side. A helical membrane pass occupies residues Ile-360 to Ile-377. Topologically, residues Glu-378–Thr-384 are cytoplasmic. A helical membrane pass occupies residues Cys-385–Val-405. The Extracellular portion of the chain corresponds to Thr-406–Val-429. Residues Phe-430–Val-450 traverse the membrane as a helical segment. The Cytoplasmic segment spans residues Ser-451 to Thr-467. Residues Ala-468–Ile-488 form a helical membrane-spanning segment. A topological domain (extracellular) is located at residue Asn-489. Residues Phe-490–Phe-510 traverse the membrane as a helical segment. At Val-511–Ser-567 the chain is on the cytoplasmic side.

Belongs to the major facilitator superfamily. Sugar transporter (TC 2.A.1.1) family.

It is found in the membrane. Functionally, probable glucose transporter. The sequence is that of Hexose transporter HXT11 (HXT11) from Saccharomyces cerevisiae (strain ATCC 204508 / S288c) (Baker's yeast).